The chain runs to 120 residues: Flagellar protein FliT (120 aa).

Residues 1-50 form a required for homodimerization region; it reads MNDSSLSLKKWHALSALSNTMLSLAQSGKWDELIEQEVAYVSLVEKISIT. Positions 59–97 are fliD binding; it reads IQDQAMVMLNNVLQNEMTLKTLLQERMDELHGLMAQTGK.

It belongs to the FliT family. In terms of assembly, homodimer. Interacts with FliD and FlhC.

The protein localises to the cytoplasm. The protein resides in the cytosol. Functionally, dual-function protein that regulates the transcription of class 2 flagellar operons and that also acts as an export chaperone for the filament-capping protein FliD. As a transcriptional regulator, acts as an anti-FlhDC factor; it directly binds FlhC, thus inhibiting the binding of the FlhC/FlhD complex to class 2 promoters, resulting in decreased expression of class 2 flagellar operons. As a chaperone, effects FliD transition to the membrane by preventing its premature polymerization, and by directing it to the export apparatus. This is Flagellar protein FliT from Enterobacter sp. (strain 638).